We begin with the raw amino-acid sequence, 644 residues long: Exoribonuclease 2 (644 aa).

Positions 189 to 516 (REDLTALNFV…NHRLLKAIIT (328 aa)) constitute an RNB domain. The S1 motif domain occupies 561 to 643 (DTRFTAEIID…ETRNVIARPV (83 aa)).

Belongs to the RNR ribonuclease family. RNase II subfamily.

It localises to the cytoplasm. The catalysed reaction is Exonucleolytic cleavage in the 3'- to 5'-direction to yield nucleoside 5'-phosphates.. Its function is as follows. Involved in mRNA degradation. Hydrolyzes single-stranded polyribonucleotides processively in the 3' to 5' direction. The chain is Exoribonuclease 2 from Yersinia pseudotuberculosis serotype O:3 (strain YPIII).